Consider the following 89-residue polypeptide: Elongation factor 1-beta (89 aa).

This sequence belongs to the EF-1-beta/EF-1-delta family.

Promotes the exchange of GDP for GTP in EF-1-alpha/GDP, thus allowing the regeneration of EF-1-alpha/GTP that could then be used to form the ternary complex EF-1-alpha/GTP/AAtRNA. In Methanococcus maripaludis (strain C7 / ATCC BAA-1331), this protein is Elongation factor 1-beta.